The primary structure comprises 306 residues: Dermonecrotic toxin LiSicTox-alphaIA1a (306 aa).

The signal sequence occupies residues 1–18 (MLPYIVLVLGCWSVLSQA). Residues 19–26 (AQTDDEER) constitute a propeptide that is removed on maturation. His-38 is a catalytic residue. Mg(2+) contacts are provided by Glu-58 and Asp-60. The active-site Nucleophile is His-74. 2 cysteine pairs are disulfide-bonded: Cys-78–Cys-84 and Cys-80–Cys-223. Asp-118 lines the Mg(2+) pocket.

Belongs to the arthropod phospholipase D family. Class II subfamily. Class IIa sub-subfamily. The cofactor is Mg(2+). As to expression, expressed by the venom gland.

It is found in the secreted. The catalysed reaction is an N-(acyl)-sphingosylphosphocholine = an N-(acyl)-sphingosyl-1,3-cyclic phosphate + choline. The enzyme catalyses an N-(acyl)-sphingosylphosphoethanolamine = an N-(acyl)-sphingosyl-1,3-cyclic phosphate + ethanolamine. It catalyses the reaction a 1-acyl-sn-glycero-3-phosphocholine = a 1-acyl-sn-glycero-2,3-cyclic phosphate + choline. It carries out the reaction a 1-acyl-sn-glycero-3-phosphoethanolamine = a 1-acyl-sn-glycero-2,3-cyclic phosphate + ethanolamine. The catalysed reaction is 1-hexadecanoyl-sn-glycero-3-phosphocholine = 1-hexadecanoyl-sn-glycero-2,3-cyclic phosphate + choline. Its activity is regulated as follows. Catalytic activity and hemolysis are inhibited by divalent ion chelators (1,10-phenanthroline, EDTA, and EGTA). In terms of biological role, dermonecrotic toxins cleave the phosphodiester linkage between the phosphate and headgroup of certain phospholipids (sphingolipid and lysolipid substrates), forming an alcohol (often choline) and a cyclic phosphate. This toxin acts on sphingomyelin (SM) with high activity. It discriminate between the number of carbon atoms in the substrates, since it prefers SM with six carbons in the fatty acid chain (SM6:0) to other SMs (SM12:0 &gt; SM16:0 &gt; SM18:0 &gt; SM2:0 &gt; SM24:0). It also acts on lysophosphatidylcholine (LPC) (LPC16:0 = LPC12:0 &gt; LPC18:0), and lyso-platelet activating factor (LPAF, an alkyl-LPC) but not on phosphatidylcholine (PC). It may also act on ceramide phosphoethanolamine (CPE), lysophosphatidylcholine (LPC) and lysophosphatidylethanolamine (LPE), but not on lysophosphatidylserine (LPS), and lysophosphatidylglycerol (LPG). It acts by transphosphatidylation, releasing exclusively cyclic phosphate products as second products. In vivo, it induces dermonecrosis, vascular permeability, platelet aggregation, inflammatory response, edema and cytotoxicity against renal epithelial cells. It causes direct nephrotoxicity and is directly toxic to liver. It also induces hemolysis in a complement-dependent manner as well as in a complement-independent manner. The hemolysis provoked in a complement-independent manner is composed of several steps. The toxin binds to erythrocyte membranes, hydrolyzes membrane phospholipids (SM and LPC) thus generating metabolism products that cause hemolysis, probably by provoking an increase of calcium inside cells. The calcium influx is due to the opening of L-type calcium channels, since L-type calcium channel blockers inhibit calcium influx. Is lethal to mice when intraperitoneally injected. This is Dermonecrotic toxin LiSicTox-alphaIA1a from Loxosceles intermedia (Brown spider).